The primary structure comprises 293 residues: tRNA(His) guanylyltransferase (293 aa).

Residues aspartate 29, glycine 30, and aspartate 76 each coordinate Mg(2+). GTP is bound by residues 29-34 (DGRGFT) and 75-76 (SD). Residues 226–252 (KKVSEEEAEEMSSSAVPEVKSKSQVEK) form a disordered region.

This sequence belongs to the tRNA(His) guanylyltransferase family. Mg(2+) is required as a cofactor.

The enzyme catalyses a 5'-end ribonucleotide-tRNA(His) + GTP + ATP + H2O = a 5'-end phospho-guanosine-ribonucleotide-tRNA(His) + AMP + 2 diphosphate + H(+). In terms of biological role, adds a GMP to the 5'-end of tRNA(His) after transcription and RNase P cleavage. The sequence is that of tRNA(His) guanylyltransferase (rgt-1) from Neurospora crassa (strain ATCC 24698 / 74-OR23-1A / CBS 708.71 / DSM 1257 / FGSC 987).